The primary structure comprises 175 residues: Pycsar effector protein RsPycTM (175 aa).

3 consecutive transmembrane segments (helical) span residues Ala17–Leu37, Pro44–Ile64, and Ala146–Ile166.

It is found in the cell inner membrane. Its function is as follows. Pycsar (pyrimidine cyclase system for antiphage resistance) provides immunity against bacteriophage. The pyrimidine cyclase (PycC) synthesizes cyclic nucleotides in response to infection; these serve as specific second messenger signals. The signals activate the nearby effector, leading to bacterial cell death and abortive phage infection. A clade A Pycsar system. Functionally, the effector gene of a two-gene Pycsar system. Expression of this and uridylate cyclase RsPycC (AC A0A4R2TZQ0) probably confers resistance to bacteriophage. The genes are probably only expressed in response to bacteriophage infection. Probably only responds to cUMP (produced by its cognate NTP cyclase), acts by impairing membrane integrity. This is Pycsar effector protein RsPycTM from Rhizobium sp. (strain PP-F2F-G36).